The primary structure comprises 491 residues: 1-aminocyclopropane-1-carboxylate synthase (491 aa).

The residue at position 278 (K278) is an N6-(pyridoxal phosphate)lysine.

Belongs to the class-I pyridoxal-phosphate-dependent aminotransferase family. Homodimer. Requires pyridoxal 5'-phosphate as cofactor.

The enzyme catalyses S-adenosyl-L-methionine = 1-aminocyclopropane-1-carboxylate + S-methyl-5'-thioadenosine + H(+). It participates in alkene biosynthesis; ethylene biosynthesis via S-adenosyl-L-methionine; ethylene from S-adenosyl-L-methionine: step 1/2. In terms of biological role, catalyzes the formation of 1-aminocyclopropane-1-carboxylate, a direct precursor of ethylene in higher plants. The polypeptide is 1-aminocyclopropane-1-carboxylate synthase (ACS1) (Nicotiana tabacum (Common tobacco)).